Reading from the N-terminus, the 197-residue chain is dITP/XTP pyrophosphatase (197 aa).

9–14 (SNNAGK) lines the substrate pocket. Residue aspartate 70 is the Proton acceptor of the active site. Aspartate 70 contacts Mg(2+). Substrate-binding positions include serine 71, 153–156 (FGYD), lysine 176, and 181–182 (HR).

This sequence belongs to the HAM1 NTPase family. As to quaternary structure, homodimer. Mg(2+) serves as cofactor.

The catalysed reaction is XTP + H2O = XMP + diphosphate + H(+). The enzyme catalyses dITP + H2O = dIMP + diphosphate + H(+). It carries out the reaction ITP + H2O = IMP + diphosphate + H(+). Pyrophosphatase that catalyzes the hydrolysis of nucleoside triphosphates to their monophosphate derivatives, with a high preference for the non-canonical purine nucleotides XTP (xanthosine triphosphate), dITP (deoxyinosine triphosphate) and ITP. Seems to function as a house-cleaning enzyme that removes non-canonical purine nucleotides from the nucleotide pool, thus preventing their incorporation into DNA/RNA and avoiding chromosomal lesions. The polypeptide is dITP/XTP pyrophosphatase (Chromobacterium violaceum (strain ATCC 12472 / DSM 30191 / JCM 1249 / CCUG 213 / NBRC 12614 / NCIMB 9131 / NCTC 9757 / MK)).